We begin with the raw amino-acid sequence, 287 residues long: Cell wall protein PIR5 (287 aa).

A signal peptide spans 1 to 21; it reads MHYKKAFLASLLSSIALTAYA. Residues 22–62 constitute a propeptide that is removed on maturation; it reads PPEPWATLTPSSKMDGGTTEYRTSFGLAVIPFTVTESKVKR. PIR1/2/3 repeat units follow at residues 62-80, 81-99, 104-122, and 144-162; these read RNVI…TQKL, PHPV…TQKV, SHIV…TAKN, and ATAV…ISSA.

Belongs to the PIR protein family. Covalently linked to beta-1,3-glucan of the inner cell wall layer via an alkali-sensitive ester linkage between the gamma-carboxyl group of glutamic acids, arising from specific glutamines within the PIR1/2/3 repeats, and hydroxyl groups of glucoses of beta-1,3-glucan chains.

The protein resides in the secreted. It localises to the cell wall. Component of the outer cell wall layer. May be involved in meiosis and sporulation. The protein is Cell wall protein PIR5 (PIR5) of Saccharomyces cerevisiae (strain RM11-1a) (Baker's yeast).